The following is a 334-amino-acid chain: Holliday junction branch migration complex subunit RuvB (334 aa).

The tract at residues 1–182 is large ATPase domain (RuvB-L); that stretch reads MNERMVDQSM…FGVHLRLEYY (182 aa). Residues leucine 21, arginine 22, glycine 63, lysine 66, threonine 67, threonine 68, 129 to 131, arginine 172, tyrosine 182, and arginine 219 each bind ATP; that span reads EDF. Mg(2+) is bound at residue threonine 67. The tract at residues 183-253 is small ATPAse domain (RuvB-S); that stretch reads NESDLKEIII…TTKHALGLLQ (71 aa). The tract at residues 256–334 is head domain (RuvB-H); it reads QHGLDYIDHK…HFAKSNEERE (79 aa). DNA is bound by residues arginine 292, arginine 311, and arginine 316.

It belongs to the RuvB family. In terms of assembly, homohexamer. Forms an RuvA(8)-RuvB(12)-Holliday junction (HJ) complex. HJ DNA is sandwiched between 2 RuvA tetramers; dsDNA enters through RuvA and exits via RuvB. An RuvB hexamer assembles on each DNA strand where it exits the tetramer. Each RuvB hexamer is contacted by two RuvA subunits (via domain III) on 2 adjacent RuvB subunits; this complex drives branch migration. In the full resolvosome a probable DNA-RuvA(4)-RuvB(12)-RuvC(2) complex forms which resolves the HJ.

The protein localises to the cytoplasm. It carries out the reaction ATP + H2O = ADP + phosphate + H(+). In terms of biological role, the RuvA-RuvB-RuvC complex processes Holliday junction (HJ) DNA during genetic recombination and DNA repair, while the RuvA-RuvB complex plays an important role in the rescue of blocked DNA replication forks via replication fork reversal (RFR). RuvA specifically binds to HJ cruciform DNA, conferring on it an open structure. The RuvB hexamer acts as an ATP-dependent pump, pulling dsDNA into and through the RuvAB complex. RuvB forms 2 homohexamers on either side of HJ DNA bound by 1 or 2 RuvA tetramers; 4 subunits per hexamer contact DNA at a time. Coordinated motions by a converter formed by DNA-disengaged RuvB subunits stimulates ATP hydrolysis and nucleotide exchange. Immobilization of the converter enables RuvB to convert the ATP-contained energy into a lever motion, pulling 2 nucleotides of DNA out of the RuvA tetramer per ATP hydrolyzed, thus driving DNA branch migration. The RuvB motors rotate together with the DNA substrate, which together with the progressing nucleotide cycle form the mechanistic basis for DNA recombination by continuous HJ branch migration. Branch migration allows RuvC to scan DNA until it finds its consensus sequence, where it cleaves and resolves cruciform DNA. The polypeptide is Holliday junction branch migration complex subunit RuvB (Staphylococcus aureus (strain bovine RF122 / ET3-1)).